The sequence spans 528 residues: Propionate catabolism operon regulatory protein (528 aa).

The Sigma-54 factor interaction domain maps to 218–461 (MLGQSPQMEQ…RNMMERLALF (244 aa)). 318–327 (AHGGTLFLDE) contacts ATP. Residues 508–527 (KTAAANYLGISRTTFWRRLK) constitute a DNA-binding region (H-T-H motif).

Functionally, involved in the transcriptional regulation of the propionate catabolism operon. This chain is Propionate catabolism operon regulatory protein (prpR), found in Escherichia coli (strain K12).